We begin with the raw amino-acid sequence, 466 residues long: Ribulose bisphosphate carboxylase large chain (466 aa).

N6,N6,N6-trimethyllysine is present on K5. Residues N114 and T164 each coordinate substrate. Residue K166 is the Proton acceptor of the active site. K168 provides a ligand contact to substrate. Residues K192, D194, and E195 each contribute to the Mg(2+) site. K192 carries the post-translational modification N6-carboxylysine. H285 serves as the catalytic Proton acceptor. 3 residues coordinate substrate: R286, H318, and S370.

The protein belongs to the RuBisCO large chain family. Type I subfamily. In terms of assembly, heterohexadecamer of 8 large chains and 8 small chains. Requires Mg(2+) as cofactor.

The protein localises to the plastid. The protein resides in the chloroplast. It catalyses the reaction 2 (2R)-3-phosphoglycerate + 2 H(+) = D-ribulose 1,5-bisphosphate + CO2 + H2O. It carries out the reaction D-ribulose 1,5-bisphosphate + O2 = 2-phosphoglycolate + (2R)-3-phosphoglycerate + 2 H(+). In terms of biological role, ruBisCO catalyzes two reactions: the carboxylation of D-ribulose 1,5-bisphosphate, the primary event in carbon dioxide fixation, as well as the oxidative fragmentation of the pentose substrate in the photorespiration process. Both reactions occur simultaneously and in competition at the same active site. This chain is Ribulose bisphosphate carboxylase large chain, found in Cornus kousa (Kousa dogwood).